Here is a 319-residue protein sequence, read N- to C-terminus: Iron-sulfur cluster transfer protein NUBPL (319 aa).

A mitochondrion-targeting transit peptide spans 1–38 (MGTWRRLLLFGGVSLRGGGAATVPPRGCRALGCGRQLL). 75–82 (GKGGVGKS) lines the ATP pocket.

It belongs to the Mrp/NBP35 ATP-binding proteins family. [4Fe-4S] cluster is required as a cofactor.

It localises to the mitochondrion. Functionally, iron-sulfur cluster transfer protein involved in the assembly of the mitochondrial membrane respiratory chain NADH dehydrogenase (Complex I). May deliver one or more Fe-S clusters to complex I subunits. The sequence is that of Iron-sulfur cluster transfer protein NUBPL (Nubpl) from Mus musculus (Mouse).